We begin with the raw amino-acid sequence, 48 residues long: Large ribosomal subunit protein bL33B (48 aa).

Belongs to the bacterial ribosomal protein bL33 family.

The sequence is that of Large ribosomal subunit protein bL33B from Streptococcus thermophilus (strain CNRZ 1066).